The following is a 273-amino-acid chain: Tryptophan synthase alpha chain (273 aa).

Active-site proton acceptor residues include E49 and D60.

The protein belongs to the TrpA family. In terms of assembly, tetramer of two alpha and two beta chains.

It carries out the reaction (1S,2R)-1-C-(indol-3-yl)glycerol 3-phosphate + L-serine = D-glyceraldehyde 3-phosphate + L-tryptophan + H2O. It functions in the pathway amino-acid biosynthesis; L-tryptophan biosynthesis; L-tryptophan from chorismate: step 5/5. Functionally, the alpha subunit is responsible for the aldol cleavage of indoleglycerol phosphate to indole and glyceraldehyde 3-phosphate. The chain is Tryptophan synthase alpha chain from Halorhodospira halophila (strain DSM 244 / SL1) (Ectothiorhodospira halophila (strain DSM 244 / SL1)).